Reading from the N-terminus, the 245-residue chain is Alpha carbonic anhydrase 2 (245 aa).

The N-terminal stretch at 1 to 23 (MDKISIRCFIFLVLTSFVTTVSC) is a signal peptide. The Alpha-carbonic anhydrase domain occupies 37–245 (HEFSYEWNQE…THRYFLLFFT (209 aa)). A disulfide bond links Cys-62 and Cys-222. Asn-95 carries an N-linked (GlcNAc...) asparagine glycan. The active-site Proton acceptor is His-103. Residue Asn-120 is glycosylated (N-linked (GlcNAc...) asparagine). The Zn(2+) site is built by His-130, His-132, and His-149. Asn-156 is a glycosylation site (N-linked (GlcNAc...) asparagine). 218-219 (TT) serves as a coordination point for substrate.

The protein belongs to the alpha-class carbonic anhydrase family. It depends on Zn(2+) as a cofactor. N-glycosylated. Expressed in stems and roots.

It is found in the plastid. The protein localises to the chloroplast stroma. The catalysed reaction is hydrogencarbonate + H(+) = CO2 + H2O. Reversible hydration of carbon dioxide. The protein is Alpha carbonic anhydrase 2 (ACA2) of Arabidopsis thaliana (Mouse-ear cress).